The primary structure comprises 150 residues: U1 small nuclear ribonucleoprotein C (150 aa).

Residues 4 to 36 (YYCDYCKSYLTHDTMSVRKSHLQGRNHIKFYCD) form a Matrin-type zinc finger. Residues 66–127 (SDAKKSNGSS…PPNLSGLPLP (62 aa)) form a disordered region. Basic and acidic residues predominate over residues 80-92 (DIDKKENSSDHNK). The segment covering 103 to 112 (NDNDDDDDEM) has biased composition (acidic residues).

It belongs to the U1 small nuclear ribonucleoprotein C family. In terms of assembly, U1 snRNP is composed of the 7 core Sm proteins B/B', D1, D2, D3, E, F and G that assemble in a heptameric protein ring on the Sm site of the small nuclear RNA to form the core snRNP, and at least 3 U1 snRNP-specific proteins U1-70K, U1-A and U1-C. U1-C interacts with U1 snRNA and the 5' splice-site region of the pre-mRNA.

It localises to the nucleus. Component of the spliceosomal U1 snRNP, which is essential for recognition of the pre-mRNA 5' splice-site and the subsequent assembly of the spliceosome. U1-C is directly involved in initial 5' splice-site recognition for both constitutive and regulated alternative splicing. The interaction with the 5' splice-site seems to precede base-pairing between the pre-mRNA and the U1 snRNA. Stimulates commitment or early (E) complex formation by stabilizing the base pairing of the 5' end of the U1 snRNA and the 5' splice-site region. In Candida albicans (strain WO-1) (Yeast), this protein is U1 small nuclear ribonucleoprotein C.